Here is a 461-residue protein sequence, read N- to C-terminus: Porin AaxA (461 aa).

The signal sequence occupies residues 1 to 22; it reads MSFRSVLLTALLSLSFTTTMQA.

The protein belongs to the OprB family.

The protein resides in the cell outer membrane. Its function is as follows. Facilitates L-arginine uptake, as part of the AaxABC system. The arginine uptake by the bacterium in the macrophage may be a virulence factor against the host innate immune response. This is Porin AaxA (aaxA) from Chlamydia trachomatis serovar L2 (strain ATCC VR-902B / DSM 19102 / 434/Bu).